Consider the following 72-residue polypeptide: Translation initiation factor IF-1 (72 aa).

The 72-residue stretch at 1 to 72 (MTKEDNIEMQ…TKGRIIFRSR (72 aa)) folds into the S1-like domain.

It belongs to the IF-1 family. In terms of assembly, component of the 30S ribosomal translation pre-initiation complex which assembles on the 30S ribosome in the order IF-2 and IF-3, IF-1 and N-formylmethionyl-tRNA(fMet); mRNA recruitment can occur at any time during PIC assembly.

Its subcellular location is the cytoplasm. Its function is as follows. One of the essential components for the initiation of protein synthesis. Stabilizes the binding of IF-2 and IF-3 on the 30S subunit to which N-formylmethionyl-tRNA(fMet) subsequently binds. Helps modulate mRNA selection, yielding the 30S pre-initiation complex (PIC). Upon addition of the 50S ribosomal subunit IF-1, IF-2 and IF-3 are released leaving the mature 70S translation initiation complex. The chain is Translation initiation factor IF-1 from Buchnera aphidicola subsp. Schizaphis graminum (strain Sg).